A 253-amino-acid chain; its full sequence is Adapter protein MecA (253 aa).

The protein belongs to the MecA family. Homodimer.

Its function is as follows. Enables the recognition and targeting of unfolded and aggregated proteins to the ClpC protease or to other proteins involved in proteolysis. This chain is Adapter protein MecA, found in Streptococcus pyogenes serotype M6 (strain ATCC BAA-946 / MGAS10394).